The primary structure comprises 128 residues: Saitohin (128 aa).

The span at 77–87 (SYSSEENSRNG) shows a compositional bias: polar residues. The tract at residues 77–128 (SYSSEENSRNGAEQGRQLSIEGPFQGQNCPSHPAAALPLPMRGESQATSCQV) is disordered.

In terms of assembly, interacts with PRDX6.

Its subcellular location is the cytoplasm. It localises to the nucleus. The chain is Saitohin (STH) from Pan troglodytes (Chimpanzee).